The following is a 156-amino-acid chain: 17.7 kDa class II heat shock protein (156 aa).

A sHSP domain is found at 39 to 156; it reads DAKAMAATPA…KPKTIQVQVA (118 aa).

Belongs to the small heat shock protein (HSP20) family. In terms of assembly, may form oligomeric structures.

The protein localises to the cytoplasm. The sequence is that of 17.7 kDa class II heat shock protein (HSP17.7) from Arabidopsis thaliana (Mouse-ear cress).